Here is a 213-residue protein sequence, read N- to C-terminus: Probable nicotinate-nucleotide adenylyltransferase (213 aa).

The protein belongs to the NadD family.

The catalysed reaction is nicotinate beta-D-ribonucleotide + ATP + H(+) = deamido-NAD(+) + diphosphate. The protein operates within cofactor biosynthesis; NAD(+) biosynthesis; deamido-NAD(+) from nicotinate D-ribonucleotide: step 1/1. Its function is as follows. Catalyzes the reversible adenylation of nicotinate mononucleotide (NaMN) to nicotinic acid adenine dinucleotide (NaAD). The polypeptide is Probable nicotinate-nucleotide adenylyltransferase (Salmonella gallinarum (strain 287/91 / NCTC 13346)).